Consider the following 124-residue polypeptide: MPTINQLIRKGRLGLTHKKKVPALGESNPQRRGVCTKVYTTTPRKPNSALRKVARVKISGYGEVTAYIPGEGHNLQEHSVVLIRGGRVKDLPGVRYHIIRGALDLRGVQNRKKARSKYGVKKSG.

Position 90 is a 3-methylthioaspartic acid (D90).

The protein belongs to the universal ribosomal protein uS12 family. In terms of assembly, part of the 30S ribosomal subunit. Contacts proteins S8 and S17. May interact with IF1 in the 30S initiation complex.

Functionally, with S4 and S5 plays an important role in translational accuracy. Its function is as follows. Interacts with and stabilizes bases of the 16S rRNA that are involved in tRNA selection in the A site and with the mRNA backbone. Located at the interface of the 30S and 50S subunits, it traverses the body of the 30S subunit contacting proteins on the other side and probably holding the rRNA structure together. The combined cluster of proteins S8, S12 and S17 appears to hold together the shoulder and platform of the 30S subunit. In Wolbachia pipientis wMel, this protein is Small ribosomal subunit protein uS12.